We begin with the raw amino-acid sequence, 169 residues long: Disulfide bond formation protein B (169 aa).

Topologically, residues 1–14 (MSNDTFYLKREKRF) are cytoplasmic. The helical transmembrane segment at 15–31 (LVLLGIICLSLIGGALY) threads the bilayer. Residues 32 to 49 (MQIALGEAPCPLCILQRY) lie on the Periplasmic side of the membrane. Cys41 and Cys44 form a disulfide bridge. Residues 50-64 (ALLFIAIFAFIGAAM) traverse the membrane as a helical segment. Over 65 to 71 (NGRRGVT) the chain is Cytoplasmic. Residues 72 to 89 (VFEALVTLSALCGIAAAG) traverse the membrane as a helical segment. Residues 90–144 (RHAWILAHPSDSCGIDILQPIVDGLPLATLFPTGFQVSGFCTTPYPPVLGLSLAQ) lie on the Periplasmic side of the membrane. An intrachain disulfide couples Cys102 to Cys130. A helical membrane pass occupies residues 145-163 (WALTAFVLTAILVPACIIR). Over 164–169 (NRRKPY) the chain is Cytoplasmic.

The protein belongs to the DsbB family.

The protein resides in the cell inner membrane. Its function is as follows. Required for disulfide bond formation in some periplasmic proteins. Acts by oxidizing the DsbA protein. In Pseudomonas syringae pv. tomato (strain ATCC BAA-871 / DC3000), this protein is Disulfide bond formation protein B.